We begin with the raw amino-acid sequence, 141 residues long: Large ribosomal subunit protein uL11 (141 aa).

This sequence belongs to the universal ribosomal protein uL11 family. In terms of assembly, part of the ribosomal stalk of the 50S ribosomal subunit. Interacts with L10 and the large rRNA to form the base of the stalk. L10 forms an elongated spine to which L12 dimers bind in a sequential fashion forming a multimeric L10(L12)X complex. In terms of processing, one or more lysine residues are methylated.

Forms part of the ribosomal stalk which helps the ribosome interact with GTP-bound translation factors. This is Large ribosomal subunit protein uL11 from Latilactobacillus sakei subsp. sakei (strain 23K) (Lactobacillus sakei subsp. sakei).